A 445-amino-acid polypeptide reads, in one-letter code: Phosphoglucosamine mutase (445 aa).

Residue serine 102 is the Phosphoserine intermediate of the active site. Serine 102, aspartate 241, aspartate 243, and aspartate 245 together coordinate Mg(2+). Serine 102 bears the Phosphoserine mark.

Belongs to the phosphohexose mutase family. Mg(2+) is required as a cofactor. In terms of processing, activated by phosphorylation.

It catalyses the reaction alpha-D-glucosamine 1-phosphate = D-glucosamine 6-phosphate. In terms of biological role, catalyzes the conversion of glucosamine-6-phosphate to glucosamine-1-phosphate. The chain is Phosphoglucosamine mutase from Citrobacter koseri (strain ATCC BAA-895 / CDC 4225-83 / SGSC4696).